The chain runs to 178 residues: Large ribosomal subunit protein uL6 (178 aa).

This sequence belongs to the universal ribosomal protein uL6 family. As to quaternary structure, part of the 50S ribosomal subunit.

Functionally, this protein binds to the 23S rRNA, and is important in its secondary structure. It is located near the subunit interface in the base of the L7/L12 stalk, and near the tRNA binding site of the peptidyltransferase center. This chain is Large ribosomal subunit protein uL6, found in Corynebacterium glutamicum (strain R).